A 132-amino-acid polypeptide reads, in one-letter code: Telomere bouquet protein 1 (132 aa).

In terms of assembly, interacts with bqt2 and sad1. The bqt1-bqt2-sad1 complex binds rap1.

Its subcellular location is the cytoplasm. It localises to the cytoskeleton. The protein localises to the microtubule organizing center. It is found in the spindle pole body. The protein resides in the chromosome. Its subcellular location is the telomere. Its function is as follows. Involved in chromosome segregation. During meiotic prophase, connects telomeres to the spindle pole body by forming a bridge between the telomere protein rap1 and the spindle pole body protein sad1. The chain is Telomere bouquet protein 1 (bqt1) from Schizosaccharomyces pombe (strain 972 / ATCC 24843) (Fission yeast).